A 110-amino-acid polypeptide reads, in one-letter code: Putative protein RIG (110 aa).

Expressed predominantly in brain and weakly in heart and lung. Expression is reduced or undetectable in cultured glioma cells, primary glioblastoma cells and malignant glioblastoma tumors.

Its function is as follows. May serve as a molecular marker for or play a role in the malignant progression of glioblastomas. In Homo sapiens (Human), this protein is Putative protein RIG (RIG).